Here is a 599-residue protein sequence, read N- to C-terminus: Aspartate--tRNA(Asp/Asn) ligase (599 aa).

Residue glutamate 180 participates in L-aspartate binding. The segment at 204–207 (QLLK) is aspartate. Arginine 226 provides a ligand contact to L-aspartate. Residues 226 to 228 (RDE) and glutamine 235 contribute to the ATP site. Histidine 457 provides a ligand contact to L-aspartate. Glutamate 491 contacts ATP. Arginine 498 contributes to the L-aspartate binding site. 543 to 546 (GWDR) contacts ATP. The segment at 565–599 (KAGGGRDPLTGAPAPISDEQRAETGVDYDPDADEN) is disordered. A compositionally biased stretch (acidic residues) spans 590–599 (VDYDPDADEN).

The protein belongs to the class-II aminoacyl-tRNA synthetase family. Type 1 subfamily. Homodimer.

The protein resides in the cytoplasm. It catalyses the reaction tRNA(Asx) + L-aspartate + ATP = L-aspartyl-tRNA(Asx) + AMP + diphosphate. Aspartyl-tRNA synthetase with relaxed tRNA specificity since it is able to aspartylate not only its cognate tRNA(Asp) but also tRNA(Asn). Reaction proceeds in two steps: L-aspartate is first activated by ATP to form Asp-AMP and then transferred to the acceptor end of tRNA(Asp/Asn). This is Aspartate--tRNA(Asp/Asn) ligase from Bifidobacterium longum (strain DJO10A).